The sequence spans 198 residues: MSSRGHSTLPRTLMAPRMISEGDLGGIAQITSSLFLGRGSVASNRHLLQARGITCIVNATIEIPNFNWPQFEYVKVPLADMPHAPIGLYFDTVADKIHSVSRKHGATLVHCAAGVSRSATLCIAYLMKFHNVCLLEAYNWVKARRPVIRPNVGFWRQLIDYERQLFGKSTVKMVQTPYGIVPDVYEKESRHLLPYWGI.

Positions G26–G167 constitute a Tyrosine-protein phosphatase domain. Catalysis depends on C111, which acts as the Phosphocysteine intermediate.

The protein belongs to the protein-tyrosine phosphatase family. Non-receptor class dual specificity subfamily. As to quaternary structure, interacts with CD28.

The enzyme catalyses O-phospho-L-tyrosyl-[protein] + H2O = L-tyrosyl-[protein] + phosphate. The catalysed reaction is O-phospho-L-seryl-[protein] + H2O = L-seryl-[protein] + phosphate. It catalyses the reaction O-phospho-L-threonyl-[protein] + H2O = L-threonyl-[protein] + phosphate. Involved in the inactivation of MAP kinases. Dephosphorylates ERK, JNK and p38 MAP-kinases. Plays a negative role in TCR signaling by dephosphorylating MAP3K7 adapter TAB1 leading to its inactivation. The chain is Dual specificity protein phosphatase 14 (DUSP14) from Bos taurus (Bovine).